The following is a 93-amino-acid chain: Small ribosomal subunit protein uS19 (93 aa).

Belongs to the universal ribosomal protein uS19 family.

In terms of biological role, protein S19 forms a complex with S13 that binds strongly to the 16S ribosomal RNA. In Helicobacter pylori (strain G27), this protein is Small ribosomal subunit protein uS19.